We begin with the raw amino-acid sequence, 432 residues long: Glutamate-1-semialdehyde 2,1-aminomutase 2 (432 aa).

Lysine 268 carries the N6-(pyridoxal phosphate)lysine modification.

It belongs to the class-III pyridoxal-phosphate-dependent aminotransferase family. HemL subfamily. In terms of assembly, homodimer. Requires pyridoxal 5'-phosphate as cofactor.

The protein localises to the cytoplasm. The enzyme catalyses (S)-4-amino-5-oxopentanoate = 5-aminolevulinate. It functions in the pathway porphyrin-containing compound metabolism; protoporphyrin-IX biosynthesis; 5-aminolevulinate from L-glutamyl-tRNA(Glu): step 2/2. The chain is Glutamate-1-semialdehyde 2,1-aminomutase 2 from Listeria monocytogenes serovar 1/2a (strain ATCC BAA-679 / EGD-e).